The primary structure comprises 98 residues: UPF0213 protein in ldhD 5'region (98 aa).

One can recognise a GIY-YIG domain in the interval 7–84; sequence NGFYFYVLWC…KKQSRKEKLK (78 aa).

This sequence belongs to the UPF0213 family.

This Pediococcus acidilactici protein is UPF0213 protein in ldhD 5'region.